A 319-amino-acid polypeptide reads, in one-letter code: Acetyl-coenzyme A carboxylase carboxyl transferase subunit alpha (319 aa).

The CoA carboxyltransferase C-terminal domain maps to 35–296 (NIDEEVHRLR…KAQLLEDLAD (262 aa)).

This sequence belongs to the AccA family. As to quaternary structure, acetyl-CoA carboxylase is a heterohexamer composed of biotin carboxyl carrier protein (AccB), biotin carboxylase (AccC) and two subunits each of ACCase subunit alpha (AccA) and ACCase subunit beta (AccD).

It is found in the cytoplasm. It carries out the reaction N(6)-carboxybiotinyl-L-lysyl-[protein] + acetyl-CoA = N(6)-biotinyl-L-lysyl-[protein] + malonyl-CoA. It functions in the pathway lipid metabolism; malonyl-CoA biosynthesis; malonyl-CoA from acetyl-CoA: step 1/1. Functionally, component of the acetyl coenzyme A carboxylase (ACC) complex. First, biotin carboxylase catalyzes the carboxylation of biotin on its carrier protein (BCCP) and then the CO(2) group is transferred by the carboxyltransferase to acetyl-CoA to form malonyl-CoA. The polypeptide is Acetyl-coenzyme A carboxylase carboxyl transferase subunit alpha (Salmonella dublin (strain CT_02021853)).